The primary structure comprises 86 residues: U2-sicaritoxin-Li1a (86 aa).

Positions M1 to A20 are cleaved as a signal peptide. Residues E21–R33 constitute a propeptide that is removed on maturation. Cystine bridges form between C35–C53, C42–C62, C52–C71, and C64–C69.

Belongs to the neurotoxin 39 family. In terms of tissue distribution, expressed by the venom gland.

It localises to the secreted. Functionally, toxin active against S.frugiperda larvae. May act on sodium channels (Nav). In Loxosceles intermedia (Brown spider), this protein is U2-sicaritoxin-Li1a.